The chain runs to 387 residues: Transcription termination/antitermination protein NusA (387 aa).

The S1 motif domain maps to 145-209 (GQVLTGVVTR…AKGPSLLVSR (65 aa)). The 68-residue stretch at 312 to 379 (AKKARVKVTK…ARERKAREEF (68 aa)) folds into the KH domain.

The protein belongs to the NusA family. As to quaternary structure, monomer. Binds directly to the core enzyme of the DNA-dependent RNA polymerase and to nascent RNA.

The protein localises to the cytoplasm. Participates in both transcription termination and antitermination. The polypeptide is Transcription termination/antitermination protein NusA (Thermus thermophilus (strain ATCC 27634 / DSM 579 / HB8)).